Consider the following 100-residue polypeptide: Small ribosomal subunit protein bS18c (100 aa).

The segment covering 1-19 has biased composition (basic residues); it reads MDKSKRPFRKSKRSFRRRL. Residues 1–23 form a disordered region; sequence MDKSKRPFRKSKRSFRRRLPPIG.

This sequence belongs to the bacterial ribosomal protein bS18 family. Part of the 30S ribosomal subunit.

The protein resides in the plastid. It is found in the chloroplast. This is Small ribosomal subunit protein bS18c from Calycanthus floridus var. glaucus (Eastern sweetshrub).